The primary structure comprises 150 residues: MTRKQKRLAIIGGGVAFLTAAVLLVMFAFSQAVAYFYVPGDLAKADVAPGTRIRLGGLVEAGSVKRGEGRTITFTVTDTLATVPVTYTGILPDLFREGQGVVAEGAFVGGSPVFVADTVLAKHDETYMPKDVADRLKAQGVTLGGEENIR.

Topologically, residues 1–7 (MTRKQKR) are cytoplasmic. Residues 8–28 (LAIIGGGVAFLTAAVLLVMFA) form a helical; Signal-anchor for type II membrane protein membrane-spanning segment. The Periplasmic segment spans residues 29–150 (FSQAVAYFYV…VTLGGEENIR (122 aa)). 2 residues coordinate heme: His123 and Tyr127.

This sequence belongs to the CcmE/CycJ family.

Its subcellular location is the cell inner membrane. In terms of biological role, heme chaperone required for the biogenesis of c-type cytochromes. Transiently binds heme delivered by CcmC and transfers the heme to apo-cytochromes in a process facilitated by CcmF and CcmH. This chain is Cytochrome c-type biogenesis protein CcmE, found in Rhizobium meliloti (strain 1021) (Ensifer meliloti).